Here is a 186-residue protein sequence, read N- to C-terminus: Signal peptidase complex catalytic subunit SEC11 (186 aa).

The Cytoplasmic portion of the chain corresponds to 1-20 (MDALGLSKLRHLKPRQLLSQ). Residues 21-41 (VLNFALILSTAFMLWKGLSVA) traverse the membrane as a helical; Signal-anchor for type II membrane protein segment. The Lumenal portion of the chain corresponds to 42–186 (TDSPSPIVVV…MGLLVIVQRE (145 aa)). Active-site charge relay system residues include Ser-55, His-102, and Asp-128. The C-terminal short (CTS) helix stretch occupies residues 172 to 183 (ALLGIMGLLVIV).

It belongs to the peptidase S26B family. As to quaternary structure, component of the signal peptidase complex (SPC) composed of a catalytic subunit SEC11 and three accessory subunits SPC1, SPC2 and SPC3. The complex induces a local thinning of the ER membrane which is used to measure the length of the signal peptide (SP) h-region of protein substrates. This ensures the selectivity of the complex towards h-regions shorter than 18-20 amino acids. SPC associates with the translocon complex.

It is found in the endoplasmic reticulum membrane. The catalysed reaction is Cleavage of hydrophobic, N-terminal signal or leader sequences from secreted and periplasmic proteins.. Catalytic component of the signal peptidase complex (SPC) which catalyzes the cleavage of N-terminal signal sequences from nascent proteins as they are translocated into the lumen of the endoplasmic reticulum. Specifically cleaves N-terminal signal peptides that contain a hydrophobic alpha-helix (h-region) shorter than 18-20 amino acids. In Tuber melanosporum (strain Mel28) (Perigord black truffle), this protein is Signal peptidase complex catalytic subunit SEC11 (SEC11).